The primary structure comprises 174 residues: Crossover junction endodeoxyribonuclease RuvC (174 aa).

Catalysis depends on residues Asp16, Glu76, and Asp148. Residues Asp16, Glu76, and Asp148 each contribute to the Mg(2+) site.

It belongs to the RuvC family. Homodimer which binds Holliday junction (HJ) DNA. The HJ becomes 2-fold symmetrical on binding to RuvC with unstacked arms; it has a different conformation from HJ DNA in complex with RuvA. In the full resolvosome a probable DNA-RuvA(4)-RuvB(12)-RuvC(2) complex forms which resolves the HJ. It depends on Mg(2+) as a cofactor.

It is found in the cytoplasm. The enzyme catalyses Endonucleolytic cleavage at a junction such as a reciprocal single-stranded crossover between two homologous DNA duplexes (Holliday junction).. In terms of biological role, the RuvA-RuvB-RuvC complex processes Holliday junction (HJ) DNA during genetic recombination and DNA repair. Endonuclease that resolves HJ intermediates. Cleaves cruciform DNA by making single-stranded nicks across the HJ at symmetrical positions within the homologous arms, yielding a 5'-phosphate and a 3'-hydroxyl group; requires a central core of homology in the junction. The consensus cleavage sequence is 5'-(A/T)TT(C/G)-3'. Cleavage occurs on the 3'-side of the TT dinucleotide at the point of strand exchange. HJ branch migration catalyzed by RuvA-RuvB allows RuvC to scan DNA until it finds its consensus sequence, where it cleaves and resolves the cruciform DNA. The chain is Crossover junction endodeoxyribonuclease RuvC from Rhodopseudomonas palustris (strain BisA53).